Reading from the N-terminus, the 187-residue chain is Elongation factor P (187 aa).

Residue lysine 34 is modified to N6-(3,6-diaminohexanoyl)-5-hydroxylysine.

This sequence belongs to the elongation factor P family. May be beta-lysylated on the epsilon-amino group of Lys-34 by the combined action of EpmA and EpmB, and then hydroxylated on the C5 position of the same residue by EpmC (if this protein is present). Lysylation is critical for the stimulatory effect of EF-P on peptide-bond formation. The lysylation moiety may extend toward the peptidyltransferase center and stabilize the terminal 3-CCA end of the tRNA. Hydroxylation of the C5 position on Lys-34 may allow additional potential stabilizing hydrogen-bond interactions with the P-tRNA.

It localises to the cytoplasm. It functions in the pathway protein biosynthesis; polypeptide chain elongation. Its function is as follows. Involved in peptide bond synthesis. Alleviates ribosome stalling that occurs when 3 or more consecutive Pro residues or the sequence PPG is present in a protein, possibly by augmenting the peptidyl transferase activity of the ribosome. Modification of Lys-34 is required for alleviation. In Vesicomyosocius okutanii subsp. Calyptogena okutanii (strain HA), this protein is Elongation factor P.